We begin with the raw amino-acid sequence, 120 residues long: DNA-directed RNA polymerase II subunit rpb11 (120 aa).

Belongs to the archaeal Rpo11/eukaryotic RPB11/RPC19 RNA polymerase subunit family. Component of the RNA polymerase II (Pol II) complex consisting of 12 subunits.

The protein resides in the nucleus. Its function is as follows. DNA-dependent RNA polymerase catalyzes the transcription of DNA into RNA using the four ribonucleoside triphosphates as substrates. Component of RNA polymerase II which synthesizes mRNA precursors and many functional non-coding RNAs. Pol II is the central component of the basal RNA polymerase II transcription machinery. It is composed of mobile elements that move relative to each other. RPB11 is part of the core element with the central large cleft. This Dictyostelium discoideum (Social amoeba) protein is DNA-directed RNA polymerase II subunit rpb11 (polr2j).